Here is a 136-residue protein sequence, read N- to C-terminus: Small ribosomal subunit protein eS6 (136 aa).

Belongs to the eukaryotic ribosomal protein eS6 family.

The sequence is that of Small ribosomal subunit protein eS6 from Methanosarcina mazei (strain ATCC BAA-159 / DSM 3647 / Goe1 / Go1 / JCM 11833 / OCM 88) (Methanosarcina frisia).